We begin with the raw amino-acid sequence, 311 residues long: Malate dehydrogenase (311 aa).

Residues 7–13 (GAAGGIG) and Asp-34 each bind NAD(+). The substrate site is built by Arg-81 and Arg-87. Residues Asn-94 and 117 to 119 (ITN) each bind NAD(+). 2 residues coordinate substrate: Asn-119 and Arg-153. The active-site Proton acceptor is the His-177. Met-227 lines the NAD(+) pocket.

The protein belongs to the LDH/MDH superfamily. MDH type 1 family. In terms of assembly, homodimer.

It carries out the reaction (S)-malate + NAD(+) = oxaloacetate + NADH + H(+). Functionally, catalyzes the reversible oxidation of malate to oxaloacetate. This Erwinia tasmaniensis (strain DSM 17950 / CFBP 7177 / CIP 109463 / NCPPB 4357 / Et1/99) protein is Malate dehydrogenase.